Consider the following 469-residue polypeptide: UDP-N-acetylmuramoylalanine--D-glutamate ligase (469 aa).

ATP is bound at residue 123 to 129; the sequence is GTNGKST.

The protein belongs to the MurCDEF family.

Its subcellular location is the cytoplasm. The catalysed reaction is UDP-N-acetyl-alpha-D-muramoyl-L-alanine + D-glutamate + ATP = UDP-N-acetyl-alpha-D-muramoyl-L-alanyl-D-glutamate + ADP + phosphate + H(+). It functions in the pathway cell wall biogenesis; peptidoglycan biosynthesis. Cell wall formation. Catalyzes the addition of glutamate to the nucleotide precursor UDP-N-acetylmuramoyl-L-alanine (UMA). This Caulobacter sp. (strain K31) protein is UDP-N-acetylmuramoylalanine--D-glutamate ligase.